A 154-amino-acid polypeptide reads, in one-letter code: Putative thioredoxin H10 (154 aa).

Residues 24-148 (NNNNSYGQTR…LQKKTAAAAD (125 aa)) enclose the Thioredoxin domain. Catalysis depends on nucleophile residues cysteine 74 and cysteine 77. Cysteine 74 and cysteine 77 are oxidised to a cystine.

This sequence belongs to the thioredoxin family.

The protein localises to the cytoplasm. Probable thiol-disulfide oxidoreductase that may be involved in the redox regulation of a number of cytosolic enzymes. This Arabidopsis thaliana (Mouse-ear cress) protein is Putative thioredoxin H10.